The following is a 205-amino-acid chain: Small ribosomal subunit protein uS4 (205 aa).

The tract at residues 18–49 (NIWGRPKSPVNKREYGPGQHGQRRKGKLSDFG) is disordered. The 64-residue stretch at 94-157 (RRLDTVVYRA…KQLALVLEAN (64 aa)) folds into the S4 RNA-binding domain.

Belongs to the universal ribosomal protein uS4 family. As to quaternary structure, part of the 30S ribosomal subunit. Contacts protein S5. The interaction surface between S4 and S5 is involved in control of translational fidelity.

In terms of biological role, one of the primary rRNA binding proteins, it binds directly to 16S rRNA where it nucleates assembly of the body of the 30S subunit. With S5 and S12 plays an important role in translational accuracy. In Nitrobacter hamburgensis (strain DSM 10229 / NCIMB 13809 / X14), this protein is Small ribosomal subunit protein uS4.